We begin with the raw amino-acid sequence, 417 residues long: Methyltransferase/ribosomally synthesized cyclic peptide lentinulin A precursor ledMA (417 aa).

The tract at residues 1–251 (METPTLNKSG…GVSTFYIPPK (251 aa)) is methyltransferase domain. Active-site residues include R72, Y76, and Y98. Residues Y98, H100, V103, A130, Q172, A213, S244, and T245 each coordinate S-adenosyl-L-methionine. Residues 252–378 (ERKEINVDII…WAFRCAMKEM (127 aa)) form a clasp domain region. The tract at residues 379–399 (PISLLDNAKQSMEEASEQGFP) is precursor leader. I401 carries the N-methylisoleucine modification. Residues V403 and V404 each carry the N-methylvaline modification. G405 carries the post-translational modification N-methylglycine. N-methylvaline is present on residues V406 and V407. Residue G408 is modified to N-methylglycine. N-methylvaline is present on V410. G411 carries the post-translational modification N-methylglycine. V413 carries the post-translational modification N-methylvaline.

It in the N-terminal section; belongs to the precorrin methyltransferase family. As to quaternary structure, homodimer. LedMA automethylates at Ile-401, Val-403, Val-404, Gly-405, Val-406, Val-407, Gly-408, Val-410, Gly-411 and Val-413 before being processed by the prolyloligopeptidase ledP which likely forms a peptidyl ester upon removal of the follower propeptide, which then undergoes macrocyclization with the N-terminus of the modified core peptide. Peptide backbone alpha-N-methylations change the physicochemical properties of amide bonds to provide structural constraints and other favorable characteristics including biological membrane permeability to peptides.

It participates in mycotoxin biosynthesis. Its function is as follows. Fusion protein of the methyltransferase ledM and the lentinulin A core peptide; part of the gene cluster that mediates the biosynthesis of lentinulin A, a highly methylated cyclic dodecapeptide with nematodicidal activity. Lentinulin A derives from the C-terminus of the ledMA protein, and it is the ledMA protein that methylates its own C-terminus using S-adenosyl methionine (SAM). The C-terminus is subsequently cleaved off and macrocyclized by the prolyloligopeptidase ledP to give the final product. The chain is Methyltransferase/ribosomally synthesized cyclic peptide lentinulin A precursor ledMA from Lentinula edodes (Shiitake mushroom).